The primary structure comprises 478 residues: Oxidative stress-induced growth inhibitor 1 (478 aa).

At Ser-12 the chain carries Phosphoserine.

It belongs to the OKL38 family. NADPH is required as a cofactor.

Its subcellular location is the midbody. Monooxygenase catalytic activity. Involved in regulation of cytokinesis; promotes RHOA activity, probably acting locally at the midbody in late cytokinesis. Monooxygenase activity is involved in stabilizing transient structures between daughter cells, termed intercellular bridges, before abscission. Regulates differentiation and proliferation through the regulation of cell death. This chain is Oxidative stress-induced growth inhibitor 1, found in Mus musculus (Mouse).